The primary structure comprises 238 residues: Keratin-associated protein 5-3 (238 aa).

11 tandem repeats follow at residues 35-38 (CCVP), 41-44 (CCKP), 47-50 (CCVP), 91-94 (CCVP), 150-153 (CCKP), 160-163 (CCKP), 170-173 (CCKP), 189-192 (CCKP), 199-202 (CCKP), 218-221 (CCKP), and 228-231 (CCVP). The tract at residues 35–231 (CCVPVCCCKP…CSSQSSCCVP (197 aa)) is 11 X 4 AA repeats of C-C-X-P.

It belongs to the KRTAP type 5 family. Interacts with hair keratins. Restricted to hair root, not detected in any other tissues.

Functionally, in the hair cortex, hair keratin intermediate filaments are embedded in an interfilamentous matrix, consisting of hair keratin-associated protein (KRTAP), which are essential for the formation of a rigid and resistant hair shaft through their extensive disulfide bond cross-linking with abundant cysteine residues of hair keratins. The matrix proteins include the high-sulfur and high-glycine-tyrosine keratins. The sequence is that of Keratin-associated protein 5-3 (KRTAP5-3) from Homo sapiens (Human).